Consider the following 80-residue polypeptide: Mu-conotoxin BuIIIC (80 aa).

Residues 1–22 form the signal peptide; it reads MMSKLGVLLTICLLLFPLFALP. The propeptide occupies 23–51; the sequence is QDGDQPADRPAERMQDDLSSEQHPLFEKR. Disulfide bonds link cysteine 56–cysteine 70, cysteine 57–cysteine 76, and cysteine 66–cysteine 77. Cysteine 77 is subject to Cysteine amide.

The protein belongs to the conotoxin M superfamily. As to expression, expressed by the venom duct.

It localises to the secreted. Its function is as follows. Mu-conotoxins block voltage-gated sodium channels. Extremely potent inhibitor of Nav1.4/SCN4A (96% inhibition at 1 uM). The inhibition is very slowly reversible. The sequence is that of Mu-conotoxin BuIIIC from Conus bullatus (Bubble cone).